The primary structure comprises 375 residues: Succinyl-diaminopimelate desuccinylase (375 aa).

His66 contacts Zn(2+). Asp68 is an active-site residue. Asp99 is a Zn(2+) binding site. Residue Glu133 is the Proton acceptor of the active site. Glu134, Glu162, and His348 together coordinate Zn(2+).

It belongs to the peptidase M20A family. DapE subfamily. In terms of assembly, homodimer. Zn(2+) is required as a cofactor. The cofactor is Co(2+).

The enzyme catalyses N-succinyl-(2S,6S)-2,6-diaminopimelate + H2O = (2S,6S)-2,6-diaminopimelate + succinate. Its pathway is amino-acid biosynthesis; L-lysine biosynthesis via DAP pathway; LL-2,6-diaminopimelate from (S)-tetrahydrodipicolinate (succinylase route): step 3/3. Catalyzes the hydrolysis of N-succinyl-L,L-diaminopimelic acid (SDAP), forming succinate and LL-2,6-diaminopimelate (DAP), an intermediate involved in the bacterial biosynthesis of lysine and meso-diaminopimelic acid, an essential component of bacterial cell walls. This chain is Succinyl-diaminopimelate desuccinylase, found in Klebsiella pneumoniae subsp. pneumoniae (strain ATCC 700721 / MGH 78578).